Consider the following 871-residue polypeptide: Metabotropic glutamate receptor 6 (871 aa).

Residues 1-23 (MGRLPVLLLWLAWWLSQAGIACG) form the signal peptide. Residues 24-579 (AGSVRLAGGL…VVRLTWSSPW (556 aa)) are Extracellular-facing. An intrachain disulfide couples Cys-51 to Cys-93. L-glutamate contacts are provided by residues Ser-148, 169 to 171 (AST), and Tyr-219. 7 disulfide bridges follow: Cys-238-Cys-530, Cys-361-Cys-377, Cys-417-Cys-424, Cys-512-Cys-531, Cys-516-Cys-534, Cys-537-Cys-549, and Cys-552-Cys-565. Asn-290 carries an N-linked (GlcNAc...) asparagine glycan. Position 301 (Asp-301) interacts with L-glutamate. Lys-394 is an L-glutamate binding site. N-linked (GlcNAc...) asparagine glycosylation is found at Asn-445 and Asn-473. Asn-561 carries an N-linked (GlcNAc...) asparagine glycan. The helical transmembrane segment at 580 to 602 (AALPLLLAVLGIMATTTIMATFM) threads the bilayer. The Cytoplasmic portion of the chain corresponds to 603-616 (RHNDTPIVRASGRE). A helical membrane pass occupies residues 617–637 (LSYVLLTGIFLIYAITFLMVA). The Extracellular portion of the chain corresponds to 638-648 (EPCAAICAARR). The chain crosses the membrane as a helical span at residues 649–667 (LLLGLGTTLSYSALLTKTN). Over 668-691 (RIYRIFEQGKRSVTPPPFISPTSQ) the chain is Cytoplasmic. The helical transmembrane segment at 692 to 712 (LVITFGLTSLQVVGVIAWLGA) threads the bilayer. Residues 713-742 (QPPHSVIDYEEQRTVDPEQARGVLKCDMSD) are Extracellular-facing. A helical membrane pass occupies residues 743-764 (LSLIGCLGYSLLLMVTCTVYAI). The Cytoplasmic portion of the chain corresponds to 765-777 (KARGVPETFNEAK). Residues 778 to 800 (PIGFTMYTTCIIWLAFVPIFFGT) form a helical membrane-spanning segment. The Extracellular segment spans residues 801-813 (AQSAEKIYIQTTT). The helical transmembrane segment at 814 to 839 (LTVSLSLSASVSLGMLYVPKTYVILF) threads the bilayer. The Cytoplasmic portion of the chain corresponds to 840 to 871 (HPEQNVQKRKRSLKKTSTMAAPPQNENAEDAK). The interval 850 to 871 (RSLKKTSTMAAPPQNENAEDAK) is disordered.

It belongs to the G-protein coupled receptor 3 family. As to quaternary structure, homodimer. Interacts with GPR179. Interacts with photoreceptor synaptic protein LRIT1 (via its N-terminal extracellular domain). In terms of tissue distribution, restricted expression in the inner nuclear layer of the retina.

The protein resides in the cell membrane. Its subcellular location is the endoplasmic reticulum membrane. It is found in the golgi apparatus membrane. The protein localises to the cell projection. It localises to the dendrite. Its function is as follows. G-protein coupled receptor for glutamate. Ligand binding causes a conformation change that triggers signaling via guanine nucleotide-binding proteins (G proteins) and modulates the activity of down-stream effectors, such as adenylate cyclase. Signaling inhibits adenylate cyclase activity. Signaling stimulates TRPM1 channel activity and Ca(2+) uptake. Required for normal vision. The sequence is that of Metabotropic glutamate receptor 6 (Grm6) from Rattus norvegicus (Rat).